The chain runs to 428 residues: Flotillin-1 (428 aa).

Phosphoserine occurs at positions 19, 163, and 385. A Phosphothreonine modification is found at Thr387.

Belongs to the band 7/mec-2 family. Flotillin subfamily. Heterooligomeric complex of flotillin-1 and flotillin-2 and caveolin-1 and caveolin-2. Interacts with ECPAS. High expression in brain, white adipose tissue, heart muscle, skeletal muscle and lung. Low expression in spleen, liver and testis.

The protein localises to the cell membrane. Its subcellular location is the endosome. It localises to the membrane. The protein resides in the caveola. It is found in the melanosome. The protein localises to the membrane raft. May act as a scaffolding protein within caveolar membranes, functionally participating in formation of caveolae or caveolae-like vesicles. The sequence is that of Flotillin-1 (Flot1) from Mus musculus (Mouse).